Reading from the N-terminus, the 388-residue chain is MTKHIKILVIGVGVAGPAVAYWLKRFGFSPVLIEKSAAVRKGGQALDIRGIATHIAKEMGIYDQICNMRTQIKCGRYVDVKGNVLHEEQGETFGFRQDDEVEILRGDLVEILMKAIADIPCEFKQSVIKIEQNEDSVTVTYKDGRVENYDLVIAADGIHSATRGMVFSKNEYQLINLGSYVSAFTIPNYLGLDHMELLCESNHKLVTLQSDSQADKAMAGFMFRSKHVLEDIRDEQEQKHFLHASFQNFGWETQNILNRMPESDDFYFDAITQIKMKSWTKGRIALIGDAAYCPSPLSGQGNNLAFVGAYILAGELKKADGDYIQAFTRYNELLHPFVEANQQFGVWVSESFLLKDDEVSKEIAEARSNKILAMIKSVSNSINLPQYE.

Residues 12–15 (VGVA), 34–36 (EKS), 44–47 (QALD), R105, Y267, D289, and 296–302 (PLSGQGN) contribute to the FAD site.

The protein belongs to the aromatic-ring hydroxylase family. Requires FAD as cofactor.

The enzyme catalyses a tetracycline + NADPH + O2 + H(+) = a (1S,10aS)-3-(CONH2)-1-(Me2N)-3,3a,4,6-(HO)4-2,5-dioxo-1H,10aH,11H,11aH-cyclopenta[b]anthracene + CO + NADP(+) + H2O. It carries out the reaction 7-chlorotetracycline + NADPH + O2 + H(+) = (1S,10S,10aS)-3-(CONH2)-9-Cl-1-(Me2N)-3,3a,4,10-(HO)4-10-Me-2,5-dioxo-1H,10aH,11H,11aH-cyclopenta[b]anthracen-6-olate + CO + NADP(+) + H2O. Its activity is regulated as follows. Inhibited by anhydrotetracycline. In terms of biological role, an FAD-requiring monooxygenase active on tetracycline antibiotic and some of its derivatives, which leads to their inactivation. Expression in E.coli confers high resistance to tetracycline and oxytetracycline, does not confer resistance to minocycline or tigecycline. Degrades tetracycline and oxytetracycline; the reaction requires NADPH. Degrades and confers resistance to chlortetracycline. The chain is Flavin-dependent monooxygenase (tet(50)) from Unknown prokaryotic organism.